We begin with the raw amino-acid sequence, 160 residues long: Phosphopantetheine adenylyltransferase (160 aa).

This sequence belongs to the eukaryotic CoaD family.

Its subcellular location is the cytoplasm. It carries out the reaction (R)-4'-phosphopantetheine + ATP + H(+) = 3'-dephospho-CoA + diphosphate. It functions in the pathway cofactor biosynthesis; coenzyme A biosynthesis. Functionally, reversibly transfers an adenylyl group from ATP to 4'-phosphopantetheine, yielding dephospho-CoA (dPCoA) and pyrophosphate. This is Phosphopantetheine adenylyltransferase from Pyrococcus furiosus (strain ATCC 43587 / DSM 3638 / JCM 8422 / Vc1).